The chain runs to 687 residues: DNA ligase (687 aa).

NAD(+)-binding positions include 33-37, 83-84, and Glu113; these read DAEFD and SL. Lys115 acts as the N6-AMP-lysine intermediate in catalysis. NAD(+)-binding residues include Arg136, Glu176, Lys292, and Lys316. Cys410, Cys413, Cys429, and Cys435 together coordinate Zn(2+). Positions 599–687 constitute a BRCT domain; it reads SVPRTLAGVT…GPPAEVGEPT (89 aa).

This sequence belongs to the NAD-dependent DNA ligase family. LigA subfamily. The cofactor is Mg(2+). Mn(2+) is required as a cofactor.

The catalysed reaction is NAD(+) + (deoxyribonucleotide)n-3'-hydroxyl + 5'-phospho-(deoxyribonucleotide)m = (deoxyribonucleotide)n+m + AMP + beta-nicotinamide D-nucleotide.. Its function is as follows. DNA ligase that catalyzes the formation of phosphodiester linkages between 5'-phosphoryl and 3'-hydroxyl groups in double-stranded DNA using NAD as a coenzyme and as the energy source for the reaction. It is essential for DNA replication and repair of damaged DNA. The chain is DNA ligase from Mycobacterium marinum (strain ATCC BAA-535 / M).